A 470-amino-acid chain; its full sequence is Aminodeoxychorismate synthase component 1 (470 aa).

It belongs to the anthranilate synthase component I family. In terms of assembly, monomer. Heterodimer consisting of two non-identical subunits: a glutamine amidotransferase subunit (PabA) and a aminodeoxychorismate synthase subunit (PabB). Requires Mg(2+) as cofactor.

It catalyses the reaction chorismate + L-glutamine = 4-amino-4-deoxychorismate + L-glutamate. It functions in the pathway cofactor biosynthesis; tetrahydrofolate biosynthesis; 4-aminobenzoate from chorismate: step 1/2. Part of a heterodimeric complex that catalyzes the two-step biosynthesis of 4-amino-4-deoxychorismate (ADC), a precursor of p-aminobenzoate (PABA) and tetrahydrofolate. In the first step, a glutamine amidotransferase (PabA) generates ammonia as a substrate that, along with chorismate, is used in the second step, catalyzed by aminodeoxychorismate synthase (PabB) to produce ADC. In Lactococcus lactis subsp. lactis (Streptococcus lactis), this protein is Aminodeoxychorismate synthase component 1 (pabB).